We begin with the raw amino-acid sequence, 285 residues long: Elongation factor Ts (285 aa).

The segment at 82–85 (TDFV) is involved in Mg(2+) ion dislocation from EF-Tu.

It belongs to the EF-Ts family.

The protein resides in the cytoplasm. In terms of biological role, associates with the EF-Tu.GDP complex and induces the exchange of GDP to GTP. It remains bound to the aminoacyl-tRNA.EF-Tu.GTP complex up to the GTP hydrolysis stage on the ribosome. The protein is Elongation factor Ts of Yersinia pseudotuberculosis serotype O:1b (strain IP 31758).